The chain runs to 338 residues: Holliday junction branch migration complex subunit RuvB (338 aa).

The large ATPase domain (RuvB-L) stretch occupies residues 1 to 184; that stretch reads MTEEERLLSA…FGIISHMEYY (184 aa). ATP-binding positions include Leu-23, Arg-24, Gly-65, Lys-68, Thr-69, Thr-70, 131–133, Arg-174, Tyr-184, and Arg-221; that span reads EDF. Thr-69 contacts Mg(2+). The interval 185 to 255 is small ATPAse domain (RuvB-S); sequence QEQDLKEIVL…IADKALTLLQ (71 aa). Positions 258–338 are head domain (RuvB-H); that stretch reads HQGLDYVDQK…GYDYLEGRKN (81 aa). Residues Arg-313 and Arg-318 each coordinate DNA.

Belongs to the RuvB family. In terms of assembly, homohexamer. Forms an RuvA(8)-RuvB(12)-Holliday junction (HJ) complex. HJ DNA is sandwiched between 2 RuvA tetramers; dsDNA enters through RuvA and exits via RuvB. An RuvB hexamer assembles on each DNA strand where it exits the tetramer. Each RuvB hexamer is contacted by two RuvA subunits (via domain III) on 2 adjacent RuvB subunits; this complex drives branch migration. In the full resolvosome a probable DNA-RuvA(4)-RuvB(12)-RuvC(2) complex forms which resolves the HJ.

The protein localises to the cytoplasm. It catalyses the reaction ATP + H2O = ADP + phosphate + H(+). Its function is as follows. The RuvA-RuvB-RuvC complex processes Holliday junction (HJ) DNA during genetic recombination and DNA repair, while the RuvA-RuvB complex plays an important role in the rescue of blocked DNA replication forks via replication fork reversal (RFR). RuvA specifically binds to HJ cruciform DNA, conferring on it an open structure. The RuvB hexamer acts as an ATP-dependent pump, pulling dsDNA into and through the RuvAB complex. RuvB forms 2 homohexamers on either side of HJ DNA bound by 1 or 2 RuvA tetramers; 4 subunits per hexamer contact DNA at a time. Coordinated motions by a converter formed by DNA-disengaged RuvB subunits stimulates ATP hydrolysis and nucleotide exchange. Immobilization of the converter enables RuvB to convert the ATP-contained energy into a lever motion, pulling 2 nucleotides of DNA out of the RuvA tetramer per ATP hydrolyzed, thus driving DNA branch migration. The RuvB motors rotate together with the DNA substrate, which together with the progressing nucleotide cycle form the mechanistic basis for DNA recombination by continuous HJ branch migration. Branch migration allows RuvC to scan DNA until it finds its consensus sequence, where it cleaves and resolves cruciform DNA. This chain is Holliday junction branch migration complex subunit RuvB, found in Enterococcus faecalis (strain ATCC 700802 / V583).